The primary structure comprises 197 residues: Holliday junction branch migration complex subunit RuvA (197 aa).

The segment at 1–63 is domain I; the sequence is MFEYLNGKLV…EDAHSLYGFV (63 aa). Positions 64 to 142 are domain II; that stretch reads NESEKALFLR…ATGAVGISLL (79 aa). Residues 142–146 form a flexible linker region; sequence LDAAP. The segment at 147 to 197 is domain III; sequence AGNLALEEAIEALQALGYKATELKKIEKKLEQEAGLTSEEYIKSALKLMMK.

The protein belongs to the RuvA family. Homotetramer. Forms an RuvA(8)-RuvB(12)-Holliday junction (HJ) complex. HJ DNA is sandwiched between 2 RuvA tetramers; dsDNA enters through RuvA and exits via RuvB. An RuvB hexamer assembles on each DNA strand where it exits the tetramer. Each RuvB hexamer is contacted by two RuvA subunits (via domain III) on 2 adjacent RuvB subunits; this complex drives branch migration. In the full resolvosome a probable DNA-RuvA(4)-RuvB(12)-RuvC(2) complex forms which resolves the HJ.

The protein localises to the cytoplasm. Functionally, the RuvA-RuvB-RuvC complex processes Holliday junction (HJ) DNA during genetic recombination and DNA repair, while the RuvA-RuvB complex plays an important role in the rescue of blocked DNA replication forks via replication fork reversal (RFR). RuvA specifically binds to HJ cruciform DNA, conferring on it an open structure. The RuvB hexamer acts as an ATP-dependent pump, pulling dsDNA into and through the RuvAB complex. HJ branch migration allows RuvC to scan DNA until it finds its consensus sequence, where it cleaves and resolves the cruciform DNA. The polypeptide is Holliday junction branch migration complex subunit RuvA (Lactococcus lactis subsp. cremoris (strain SK11)).